The primary structure comprises 100 residues: MQIGRVRGTVVSSQKEPSMVGVKFLLLQLIDEAGQPLPQYEVAADGVGAGLDEWVLFSRGSAARQVAGSEKRPVDAVVIGIIDTVSVDNRPLYSKKDQYR.

Positions 1-83 constitute a BMV domain; the sequence is MQIGRVRGTV…VDAVVIGIID (83 aa).

The protein belongs to the CcmL/EutN family. CcmL subfamily. As to quaternary structure, homopentamer. Interacts with full-length CcmM.

It localises to the carboxysome. Probably forms vertices in the carboxysome, a polyhedral inclusion where RuBisCO (ribulose bisphosphate carboxylase, rbcL-rbcS) is sequestered. Has been modeled to induce curvature upon insertion into an otherwise flat hexagonal molecular layer of CcmK subunits. This chain is Carboxysome shell vertex protein CcmL, found in Gloeobacter violaceus (strain ATCC 29082 / PCC 7421).